The sequence spans 337 residues: MRSAIAAPILFLLVSFFVQECESVGFAPELYCGLENCYDVLEVNREEFDKQKLAKAYRALARKHHPDRVKNKEEKLLAEERFRVIATAYETLKDDEAKTNYDYYLDHPDQRFYNYYQYYRLRAAPKVDLRIVIVGTILIISLFQFLSAKHKFSEAIEYATGVGKFRNMAIKDGIDKGLLEMDRNGKLKKNKGVDNDEVIKQIIIDNLDVTGGYKRESIYDTLAWHTIIFPLTIFRYIKWTALWYWRFAIQKEEYDDDAKLYLIRKYIGVSQMEFDQKYTDEDIDDLFERECWLKRNCATWKAERDAAEQEKMAQSGRYKRYKRYMKNAGTISFVDED.

The helical transmembrane segment at 4–24 (AIAAPILFLLVSFFVQECESV) threads the bilayer. Residues 36–105 (NCYDVLEVNR…EAKTNYDYYL (70 aa)) enclose the J domain. 2 consecutive transmembrane segments (helical) span residues 127-147 (VDLR…QFLS) and 222-242 (LAWH…WTAL). Residues 293 to 323 (LKRNCATWKAERDAAEQEKMAQSGRYKRYKR) adopt a coiled-coil conformation.

It belongs to the DNAJC25 family.

Its subcellular location is the membrane. This Caenorhabditis elegans protein is DnaJ homolog dnj-2 (dnj-2).